The primary structure comprises 195 residues: Glutathione S-transferase class-mu 26 kDa isozyme (195 aa).

The region spanning methionine 1–glycine 83 is the GST N-terminal domain. Residues tyrosine 7–tryptophan 8, tryptophan 41–lysine 45, asparagine 54–leucine 55, and glutamine 67–serine 68 each bind glutathione. The region spanning cysteine 85–lysine 195 is the GST C-terminal domain. Tyrosine 111 is a substrate binding site.

The protein belongs to the GST superfamily. Mu family. In terms of assembly, homodimer.

It carries out the reaction RX + glutathione = an S-substituted glutathione + a halide anion + H(+). Functionally, conjugation of reduced glutathione to a wide number of exogenous and endogenous hydrophobic electrophiles. GST isoenzymes appear to play a central role in the parasite detoxification system. Other functions are also suspected including a role in increasing the solubility of haematin in the parasite gut. This chain is Glutathione S-transferase class-mu 26 kDa isozyme, found in Schistosoma mansoni (Blood fluke).